The primary structure comprises 1883 residues: Transmembrane protein 131 (1883 aa).

The first 22 residues, 1 to 22 (MGKRAGGGATGATTAAVSTSAG), serve as a signal peptide directing secretion. Residues 23–1117 (AGLEPAAARS…AEALPRPNWE (1095 aa)) are Lumenal-facing. The tract at residues 109-283 (RFEPPMLDFH…ETKGVMRASF (175 aa)) is papD-L domain. An N-linked (GlcNAc...) asparagine glycan is attached at N300. S803 is subject to Phosphoserine. The helical transmembrane segment at 1118 to 1138 (LALYIIISGIMSALFLLVIGT) threads the bilayer. The Cytoplasmic portion of the chain corresponds to 1139–1883 (AYLEAQGIWE…WSNSHFPHEN (745 aa)). Disordered stretches follow at residues 1198–1580 (GAGG…DSLY), 1593–1656 (LKQR…KNGN), 1670–1712 (PGGN…PVSN), 1766–1789 (WESP…HTAT), and 1832–1858 (MGTE…TYNP). The span at 1237-1261 (AKNSSSTSSRTSAQAASSQSANKTS) shows a compositional bias: low complexity. The segment covering 1302–1316 (PQPPLPPPVPQPQEP) has biased composition (pro residues). Residues S1322 and S1342 each carry the phosphoserine modification. Basic and acidic residues-rich tracts occupy residues 1330 to 1343 (SHPE…HSSE) and 1353 to 1364 (AMDKDFDHHDSP). At S1375 the chain carries Phosphoserine. Over residues 1380–1394 (SKGKGKPLQRKVKPP) the composition is skewed to basic residues. Residues 1395 to 1417 (KKQEEKEKKGKGKPQEDELKDSL) show a composition bias toward basic and acidic residues. Residues 1423–1434 (SSTTTETSNPDT) are compositionally biased toward low complexity. The span at 1436 to 1458 (PLLKEDTEKQKGKQAMPEKHESE) shows a compositional bias: basic and acidic residues. Composition is skewed to polar residues over residues 1510-1526 (AMTS…TKGT) and 1542-1553 (PNSQELGNTSSS). Residues 1602–1611 (PASPSPPAAP) show a composition bias toward pro residues. Low complexity predominate over residues 1619 to 1630 (SYSSIVNSSSSS). Residues 1678-1690 (VSSNKTGFSSSLG) show a composition bias toward polar residues. Low complexity-rich tracts occupy residues 1773-1784 (PSPSWPASSGSP) and 1837-1849 (SPAP…SSPA). S1863 and S1871 each carry phosphoserine.

The protein belongs to the TMEM131 family. As to quaternary structure, interacts (via PapD-L domain) with COL1A2 (via C-terminus); the interaction is direct, may occur with other collagen proteins, and is involved in assembly and TRAPPIII ER-to-Golgi transport complex-dependent secretion of collagen. Interacts (via C-terminus) with TRAPPC8 (via C-terminus); the interaction is direct.

The protein localises to the membrane. In terms of biological role, collagen binding transmembrane protein involved in collagen secretion by recruiting the ER-to-Golgi transport complex TRAPPIII. May play a role in the immune response to viral infection. The sequence is that of Transmembrane protein 131 from Homo sapiens (Human).